Reading from the N-terminus, the 333-residue chain is DNA-directed RNA polymerase subunit alpha (333 aa).

An alpha N-terminal domain (alpha-NTD) region spans residues 1-233; it reads MVQEKLRFST…DLFIPFLHAE (233 aa). Residues 266–333 are alpha C-terminal domain (alpha-CTD); that stretch reads KKEIALKSIF…DILKIQKYFT (68 aa).

This sequence belongs to the RNA polymerase alpha chain family. As to quaternary structure, in plastids the minimal PEP RNA polymerase catalytic core is composed of four subunits: alpha, beta, beta', and beta''. When a (nuclear-encoded) sigma factor is associated with the core the holoenzyme is formed, which can initiate transcription.

It localises to the plastid. The protein resides in the chloroplast. It catalyses the reaction RNA(n) + a ribonucleoside 5'-triphosphate = RNA(n+1) + diphosphate. DNA-dependent RNA polymerase catalyzes the transcription of DNA into RNA using the four ribonucleoside triphosphates as substrates. This is DNA-directed RNA polymerase subunit alpha from Phaseolus angularis (Azuki bean).